The chain runs to 342 residues: Phosphate acyltransferase (342 aa).

Belongs to the PlsX family. As to quaternary structure, homodimer. Probably interacts with PlsY.

The protein localises to the cytoplasm. The catalysed reaction is a fatty acyl-[ACP] + phosphate = an acyl phosphate + holo-[ACP]. The protein operates within lipid metabolism; phospholipid metabolism. Catalyzes the reversible formation of acyl-phosphate (acyl-PO(4)) from acyl-[acyl-carrier-protein] (acyl-ACP). This enzyme utilizes acyl-ACP as fatty acyl donor, but not acyl-CoA. The protein is Phosphate acyltransferase of Shewanella amazonensis (strain ATCC BAA-1098 / SB2B).